The chain runs to 249 residues: ATP synthase subunit a (249 aa).

6 consecutive transmembrane segments (helical) span residues 30–50 (SLYMLLAVGAVALLMLGGSAG), 84–104 (FFPLVFSIFMFVLMANLIGVI), 114–134 (LIVTVALALIVFLTVLLYGLY), 143–163 (VFVPSGVPIYILPLIAMIEVI), 193–213 (FVTSLGALGVAGIAGAALPLA), and 220–240 (ILEVLVALLQAYVFAILTCIY).

The protein belongs to the ATPase A chain family. In terms of assembly, F-type ATPases have 2 components, CF(1) - the catalytic core - and CF(0) - the membrane proton channel. CF(1) has five subunits: alpha(3), beta(3), gamma(1), delta(1), epsilon(1). CF(0) has three main subunits: a(1), b(2) and c(9-12). The alpha and beta chains form an alternating ring which encloses part of the gamma chain. CF(1) is attached to CF(0) by a central stalk formed by the gamma and epsilon chains, while a peripheral stalk is formed by the delta and b chains.

The protein resides in the cell inner membrane. In terms of biological role, key component of the proton channel; it plays a direct role in the translocation of protons across the membrane. This Afipia carboxidovorans (strain ATCC 49405 / DSM 1227 / KCTC 32145 / OM5) (Oligotropha carboxidovorans) protein is ATP synthase subunit a.